A 174-amino-acid polypeptide reads, in one-letter code: Interleukin-1 receptor antagonist protein (174 aa).

The N-terminal stretch at 1–23 is a signal peptide; the sequence is MDIYIHGYLICLLLFLFRSETAC. Cys89 and Cys139 are oxidised to a cystine. Asn107 carries N-linked (GlcNAc...) asparagine glycosylation.

The protein belongs to the IL-1 family.

The protein resides in the secreted. Functionally, anti-inflammatory antagonist of interleukin-1 family of proinflammatory cytokines such as interleukin-1beta/IL1B and interleukin-1alpha/IL1A. Protects from immune dysregulation and uncontrolled systemic inflammation triggered by IL1 for a range of innate stimulatory agents such as pathogens. This is Interleukin-1 receptor antagonist protein (IL1RN) from Bos taurus (Bovine).